The sequence spans 338 residues: RNA 3'-terminal phosphate cyclase (338 aa).

ATP contacts are provided by residues Gln-103 and 283–287; that span reads YLADQ. Catalysis depends on His-308, which acts as the Tele-AMP-histidine intermediate.

The protein belongs to the RNA 3'-terminal cyclase family. Type 1 subfamily.

The protein resides in the cytoplasm. The enzyme catalyses a 3'-end 3'-phospho-ribonucleotide-RNA + ATP = a 3'-end 2',3'-cyclophospho-ribonucleotide-RNA + AMP + diphosphate. Its function is as follows. Catalyzes the conversion of 3'-phosphate to a 2',3'-cyclic phosphodiester at the end of RNA. The mechanism of action of the enzyme occurs in 3 steps: (A) adenylation of the enzyme by ATP; (B) transfer of adenylate to an RNA-N3'P to produce RNA-N3'PP5'A; (C) and attack of the adjacent 2'-hydroxyl on the 3'-phosphorus in the diester linkage to produce the cyclic end product. The biological role of this enzyme is unknown but it is likely to function in some aspects of cellular RNA processing. The sequence is that of RNA 3'-terminal phosphate cyclase from Escherichia coli O139:H28 (strain E24377A / ETEC).